The primary structure comprises 232 residues: Large ribosomal subunit protein uL1 (232 aa).

This sequence belongs to the universal ribosomal protein uL1 family. As to quaternary structure, part of the 50S ribosomal subunit.

In terms of biological role, binds directly to 23S rRNA. The L1 stalk is quite mobile in the ribosome, and is involved in E site tRNA release. Its function is as follows. Protein L1 is also a translational repressor protein, it controls the translation of the L11 operon by binding to its mRNA. In Phocaeicola vulgatus (strain ATCC 8482 / DSM 1447 / JCM 5826 / CCUG 4940 / NBRC 14291 / NCTC 11154) (Bacteroides vulgatus), this protein is Large ribosomal subunit protein uL1.